We begin with the raw amino-acid sequence, 1076 residues long: GPI inositol-deacylase A (1076 aa).

A helical membrane pass occupies residues 3 to 23; the sequence is IATFPALAITALALVLWATVA. 2 N-linked (GlcNAc...) asparagine glycosylation sites follow: Asn48 and Asn119. Ser240 is a catalytic residue. Asn404 carries an N-linked (GlcNAc...) asparagine glycan. 2 helical membrane passes run 765–785 and 815–835; these read FLGF…LCLL and WILA…SLLY. The N-linked (GlcNAc...) asparagine glycan is linked to Asn849. A run of 3 helical transmembrane segments spans residues 855-875, 877-897, and 910-930; these read FLGP…HWLL, ILTL…IAPE, and FLLL…VAVL. N-linked (GlcNAc...) asparagine glycans are attached at residues Asn952 and Asn966. 3 helical membrane passes run 970-990, 1006-1026, and 1035-1055; these read SLLL…VVWL, EVSA…GIMI, and IYAT…HGVV.

Belongs to the GPI inositol-deacylase family.

The protein resides in the endoplasmic reticulum membrane. Involved in inositol deacylation of GPI-anchored proteins which plays important roles in the quality control and ER-associated degradation of GPI-anchored proteins. The sequence is that of GPI inositol-deacylase A (BST1A) from Yarrowia lipolytica (strain CLIB 122 / E 150) (Yeast).